Consider the following 503-residue polypeptide: N-fatty-acyl-amino acid synthase/hydrolase PM20D1 (503 aa).

The N-terminal stretch at 1 to 24 (MAELLASLPAWAAVLLLFFATVSG) is a signal peptide. Asparagine 72 carries N-linked (GlcNAc...) asparagine glycosylation. Residue histidine 125 participates in Zn(2+) binding. The active site involves aspartate 127. Aspartate 157 lines the Zn(2+) pocket. The active-site Proton acceptor is the glutamate 191. Residues glutamate 192 and aspartate 218 each coordinate Zn(2+). The N-linked (GlcNAc...) asparagine glycan is linked to asparagine 443. Histidine 465 lines the Zn(2+) pocket.

Belongs to the peptidase M20A family. Zn(2+) is required as a cofactor. As to expression, in addition to being detected in blood (at protein level), PM20D1 is also highly expressed in other tissues including brown adipocytes, liver and kidney. It is also expressed in small intestine, large intestine, heart and pancreas.

It is found in the secreted. It catalyses the reaction an N-acyl-L-amino acid + H2O = an L-alpha-amino acid + a carboxylate. The enzyme catalyses an N-acyl-aromatic L-alpha-amino acid + H2O = an aromatic L-alpha-amino acid + a carboxylate. It carries out the reaction N-(5Z,8Z,11Z,14Z)-eicosatetraenoyl-glycine + H2O = (5Z,8Z,11Z,14Z)-eicosatetraenoate + glycine. The catalysed reaction is N-hexadecanoyl-L-phenylalanine + H2O = hexadecanoate + L-phenylalanine. It catalyses the reaction N-octadecanoyl-L-phenylalanine + H2O = octadecanoate + L-phenylalanine. The enzyme catalyses N-(4Z,7Z,10Z,13Z,16Z,19Z-docosahexaenoyl)-L-phenylalanine + H2O = (4Z,7Z,10Z,13Z,16Z,19Z)-docosahexaenoate + L-phenylalanine. It carries out the reaction N-(9Z-octadecenoyl)-L-asparagine + H2O = L-asparagine + (9Z)-octadecenoate. The catalysed reaction is (9Z)-octadecenoate + glycine = N-(9Z-octadecenoyl)glycine + H2O. It catalyses the reaction N-(9Z-octadecenoyl)-L-lysine + H2O = L-lysine + (9Z)-octadecenoate. The enzyme catalyses N-(9Z-octadecenoyl)-L-methionine + H2O = (9Z)-octadecenoate + L-methionine. It carries out the reaction N-(9Z-octadecenoyl)-L-serine + H2O = L-serine + (9Z)-octadecenoate. The catalysed reaction is N-(9Z-octadecenoyl)-L-tryptophan + H2O = L-tryptophan + (9Z)-octadecenoate. It catalyses the reaction N-(9Z-octadecenoyl)-L-tyrosine + H2O = L-tyrosine + (9Z)-octadecenoate. The enzyme catalyses N-(9Z-octadecenoyl)-L-glutamine + H2O = L-glutamine + (9Z)-octadecenoate. It carries out the reaction N-(5Z,8Z,11Z,14Z-eicosatetraenoyl)-L-serine + H2O = (5Z,8Z,11Z,14Z)-eicosatetraenoate + L-serine. The catalysed reaction is (5Z,8Z,11Z,14Z)-eicosatetraenoate + L-phenylalanine = N-(5Z,8Z,11Z,14Z-eicosatetraenoyl)-L-phenylalanine + H2O. It catalyses the reaction N-(9Z-octadecenoyl)-L-leucine + H2O = L-leucine + (9Z)-octadecenoate. The enzyme catalyses L-phenylalanine + (9Z)-octadecenoate = N-(9Z-octadecenoyl)-L-phenylalanine + H2O. The protein operates within amino-acid metabolism. It participates in energy metabolism; electron transfer. Its pathway is lipid metabolism; fatty acid metabolism. With respect to regulation, lipoproteins are powerful coactivators of PM20D1 activity in vitro and NAA biosynthesis in vivo. Functionally, secreted enzyme that regulates the endogenous N-fatty acyl amino acid (NAAs) tissue and circulating levels by functioning as a bidirectional NAA synthase/hydrolase. It condenses free fatty acids and free amino acids to generate NAAs and bidirectionally catalyzes the reverse hydrolysis reaction. Some of these NAAs stimulate oxidative metabolism via mitochondrial uncoupling, increasing energy expenditure in a UPC1-independent manner. Thereby, this secreted protein may indirectly regulate whole body energy expenditure. PM20D1 circulates in tight association with both low- and high-density (LDL and HDL,respectively) lipoprotein particles. The chain is N-fatty-acyl-amino acid synthase/hydrolase PM20D1 from Mus musculus (Mouse).